A 237-amino-acid chain; its full sequence is Carboxy-S-adenosyl-L-methionine synthase (237 aa).

S-adenosyl-L-methionine-binding positions include Tyr36, 61 to 63 (GAS), 86 to 87 (DN), 112 to 113 (DI), Asn127, and Arg194.

This sequence belongs to the class I-like SAM-binding methyltransferase superfamily. Cx-SAM synthase family. Homodimer.

The catalysed reaction is prephenate + S-adenosyl-L-methionine = carboxy-S-adenosyl-L-methionine + 3-phenylpyruvate + H2O. Its function is as follows. Catalyzes the conversion of S-adenosyl-L-methionine (SAM) to carboxy-S-adenosyl-L-methionine (Cx-SAM). This is Carboxy-S-adenosyl-L-methionine synthase from Ruthia magnifica subsp. Calyptogena magnifica.